Consider the following 228-residue polypeptide: Sugar fermentation stimulation protein homolog (228 aa).

The protein belongs to the SfsA family.

The protein is Sugar fermentation stimulation protein homolog of Desulfitobacterium hafniense (strain Y51).